The sequence spans 230 residues: Ribonuclease 3 (230 aa).

In terms of domain architecture, RNase III spans 1–134 (MKQLEELLST…FLGALLLDKG (134 aa)). A Mg(2+)-binding site is contributed by Glu-47. Asp-51 is an active-site residue. Mg(2+) is bound by residues Asp-120 and Glu-123. Residue Glu-123 is part of the active site. The DRBM domain occupies 160–229 (DYKTCLQEFL…AKNALAQLSE (70 aa)).

This sequence belongs to the ribonuclease III family. Homodimer. The cofactor is Mg(2+).

It is found in the cytoplasm. It carries out the reaction Endonucleolytic cleavage to 5'-phosphomonoester.. In terms of biological role, digests double-stranded RNA. Involved in the processing of primary rRNA transcript to yield the immediate precursors to the large and small rRNAs (23S and 16S). Processes some mRNAs, and tRNAs when they are encoded in the rRNA operon. Processes pre-crRNA and tracrRNA of type II CRISPR loci if present in the organism. The polypeptide is Ribonuclease 3 (Streptococcus pyogenes serotype M49 (strain NZ131)).